The following is a 223-amino-acid chain: MVSFKQVRVPLFTAIALVIVLLLAYFLPPRVRGGGRVAAAAITWVPKPNVEVWPVDPPPPVNFNKTAEQEYGDKEVKLPHWTPTLHTFQVPQNYTKANCTYCNTREYTFSYKGCCFYFTKKKHTWNGCFQACAELYPCTYFYGPTPDILPVVTRNLNAIESLWVGVYRVGEGNWTSLDGGTFKVYQIFGSHCTYVSKFSTVPVSHHECSFLKPCLCVSQRSNS.

The Intravirion portion of the chain corresponds to 1-8 (MVSFKQVR). The helical transmembrane segment at 9–29 (VPLFTAIALVIVLLLAYFLPP) threads the bilayer. Topologically, residues 30 to 223 (RVRGGGRVAA…CLCVSQRSNS (194 aa)) are virion surface. Cystine bridges form between C99/C138, C102/C115, C128/C214, C132/C216, and C192/C208. Residues 111 to 217 (YKGCCFYFTK…CSFLKPCLCV (107 aa)) form the C-type lectin domain.

The protein belongs to the epstein barr virus gp42 family. In terms of assembly, forms a complex with gp25 and gp85 via its N-terminus; this complex is used for invasion of B-lymphocytes. Interacts with human HLA-DRA and HLA-DRB1.

The protein localises to the virion membrane. It is found in the host membrane. Plays a role in virion attachment to host B-lymphocytes, through binding to leukocyte antigen (HLA) class II and subsequently participates in fusion of the virion with host membranes. May act as a tropism switch that directs fusion with B-lymphocytes and inhibits fusion with epithelial cells. Additionally, hampers T-cell recognition via HLA class II molecules through steric hindrance of T-cell receptor-class II-peptide interaction. In terms of biological role, soluble gp42 inhibits HLA class II-restricted antigen presentation to T-cells through binding to immature and mature HLA class II complexes. The sequence is that of Glycoprotein 42 from Epstein-Barr virus (strain B95-8) (HHV-4).